Reading from the N-terminus, the 162-residue chain is Shikimate kinase (162 aa).

ATP is bound at residue 11 to 16 (GSGKSS). Ser15 is a Mg(2+) binding site. Residues Asp33, Arg57, and Gly80 each contribute to the substrate site. Arg116 lines the ATP pocket. Arg132 contacts substrate.

It belongs to the shikimate kinase family. In terms of assembly, monomer. Mg(2+) serves as cofactor.

Its subcellular location is the cytoplasm. It catalyses the reaction shikimate + ATP = 3-phosphoshikimate + ADP + H(+). It functions in the pathway metabolic intermediate biosynthesis; chorismate biosynthesis; chorismate from D-erythrose 4-phosphate and phosphoenolpyruvate: step 5/7. Its function is as follows. Catalyzes the specific phosphorylation of the 3-hydroxyl group of shikimic acid using ATP as a cosubstrate. The protein is Shikimate kinase of Helicobacter pylori (strain J99 / ATCC 700824) (Campylobacter pylori J99).